The following is a 301-amino-acid chain: Chitosanase (301 aa).

The N-terminal stretch at 1 to 42 (MHMSNARPSKSRTKFLLAFLCFTLMASLFGATALFGPSKAAA) is a signal peptide. Glu79 acts as the Proton donor in catalysis. Cys92 and Cys166 are disulfide-bonded. The active-site Nucleophile is the Asp97.

It belongs to the glycosyl hydrolase 46 family.

Its subcellular location is the secreted. It carries out the reaction Endohydrolysis of beta-(1-&gt;4)-linkages between D-glucosamine residues in a partly acetylated chitosan.. Aids in the defense against invading fungal pathogens by degrading their cell wall chitosan. The protein is Chitosanase (csn) of Niallia circulans (Bacillus circulans).